A 351-amino-acid chain; its full sequence is MIVQRVVLNSRPGKNGNPVAENFRMEEVYLPDNINEGQVQVRTLYLSVDPYMRCRMNEDTGTDYITPWQLSQVVDGGGIGIIEESKHTNLTKGDFVTSFYWPWQTKVILDGNSLEKVDPQLVDGHLSYFLGAIGMPGLTSLIGIQEKGHITAGSNKTMVVSGAAGACGSVAGQIGHFLGCSRVVGICGTHEKCILLTSELGFDAAINYKKDNVAEQLRESCPAGVDVYFDNVGGNISDTVISQMNENSHIILCGQISQYNKDVPYPPPLSPAIEAIQKERNITRERFLVLNYKDKFEPGILQLSQWFKEGKLKIKETVINGLENMGAAFQSMMTGGNIGKQIVCISEEISL.

Residue 99–100 coordinates substrate; it reads FY. NADP(+) contacts are provided by residues 165 to 168, K192, Y208, N231, 253 to 259, 287 to 289, and N337; these read GACG, CGQISQY, and FLV. A substrate-binding site is contributed by 288 to 290; that stretch reads LVL.

This sequence belongs to the NADP-dependent oxidoreductase L4BD family. In terms of assembly, monomer. Widely expressed.

It is found in the cytoplasm. The enzyme catalyses 13,14-dihydro-15-oxo-prostaglandin E2 + NAD(+) = 15-oxoprostaglandin E2 + NADH + H(+). It carries out the reaction 13,14-dihydro-15-oxo-prostaglandin E2 + NADP(+) = 15-oxoprostaglandin E2 + NADPH + H(+). It catalyses the reaction 13,14-dihydro-15-oxo-PGF2alpha + NADP(+) = 15-oxoprostaglandin F2alpha + NADPH + H(+). The catalysed reaction is 13,14-dihydro-15-oxo-prostaglandin E1 + NADP(+) = 15-oxoprostaglandin E1 + NADPH + H(+). The enzyme catalyses 13,14-dihydro-15-oxo-prostaglandin F1alpha + NADP(+) = 15-oxoprostaglandin F1alpha + NADPH + H(+). Its function is as follows. Functions as 15-oxo-prostaglandin 13-reductase and acts on 15-keto-PGE1, 15-keto-PGE2, 15-keto-PGE1-alpha and 15-keto-PGE2-alpha with highest activity towards 15-keto-PGE2. Overexpression represses transcriptional activity of PPARG and inhibits adipocyte differentiation. This Homo sapiens (Human) protein is Prostaglandin reductase 2.